Reading from the N-terminus, the 360-residue chain is Uroporphyrinogen decarboxylase (360 aa).

Substrate-binding positions include 31–35 (RQAGR), aspartate 81, tyrosine 157, threonine 212, and histidine 333.

It belongs to the uroporphyrinogen decarboxylase family. Homodimer.

The protein localises to the cytoplasm. It catalyses the reaction uroporphyrinogen III + 4 H(+) = coproporphyrinogen III + 4 CO2. It functions in the pathway porphyrin-containing compound metabolism; protoporphyrin-IX biosynthesis; coproporphyrinogen-III from 5-aminolevulinate: step 4/4. Catalyzes the decarboxylation of four acetate groups of uroporphyrinogen-III to yield coproporphyrinogen-III. The polypeptide is Uroporphyrinogen decarboxylase (Herminiimonas arsenicoxydans).